We begin with the raw amino-acid sequence, 156 residues long: ATP synthase subunit b', chloroplastic (156 aa).

The helical transmembrane segment at 20 to 42 (NGTLPLMALQFLTLMVLLNTIFY) threads the bilayer.

The protein belongs to the ATPase B chain family. As to quaternary structure, F-type ATPases have 2 components, F(1) - the catalytic core - and F(0) - the membrane proton channel. F(1) has five subunits: alpha(3), beta(3), gamma(1), delta(1), epsilon(1). F(0) has four main subunits: a(1), b(1), b'(1) and c(10-14). The alpha and beta chains form an alternating ring which encloses part of the gamma chain. F(1) is attached to F(0) by a central stalk formed by the gamma and epsilon chains, while a peripheral stalk is formed by the delta, b and b' chains.

Its subcellular location is the plastid. It is found in the chloroplast thylakoid membrane. Its function is as follows. F(1)F(0) ATP synthase produces ATP from ADP in the presence of a proton or sodium gradient. F-type ATPases consist of two structural domains, F(1) containing the extramembraneous catalytic core and F(0) containing the membrane proton channel, linked together by a central stalk and a peripheral stalk. During catalysis, ATP synthesis in the catalytic domain of F(1) is coupled via a rotary mechanism of the central stalk subunits to proton translocation. Component of the F(0) channel, it forms part of the peripheral stalk, linking F(1) to F(0). The b'-subunit is a diverged and duplicated form of b found in plants and photosynthetic bacteria. This Pyropia yezoensis (Susabi-nori) protein is ATP synthase subunit b', chloroplastic.